Here is a 211-residue protein sequence, read N- to C-terminus: High frequency lysogenization protein HflD homolog (211 aa).

Belongs to the HflD family.

It is found in the cytoplasm. Its subcellular location is the cell membrane. This chain is High frequency lysogenization protein HflD homolog, found in Buchnera aphidicola subsp. Acyrthosiphon pisum (strain 5A).